Consider the following 458-residue polypeptide: Monomethylamine methyltransferase MtmB1 (458 aa).

Residue pyrrolysine 202 is a non-standard amino acid, pyrrolysine.

Belongs to the monomethylamine methyltransferase family. In terms of assembly, dimer of homotrimers. Can form a complex with MtmC (MtmC1 or MtmC2).

The enzyme catalyses Co(I)-[methylamine-specific corrinoid protein] + methylamine + H(+) = methyl-Co(III)-[methylamine-specific corrinoid protein] + NH4(+). It participates in one-carbon metabolism; methanogenesis from methylamine. In terms of biological role, catalyzes the transfer of the methyl group from monomethylamine to the corrinoid cofactor of MtmC (MtmC1 or MtmC2). The chain is Monomethylamine methyltransferase MtmB1 (mtmB1) from Methanosarcina barkeri.